We begin with the raw amino-acid sequence, 327 residues long: Annexin A8 (327 aa).

Annexin repeat units follow at residues 21 to 92 (FNPV…ALMY), 93 to 164 (PPYR…CLLQ), 177 to 249 (GLAL…TIVK), and 253 to 324 (NLHC…SLVG). 4 residues coordinate Ca(2+): Met266, Gly268, Gly270, and Asp310.

The protein belongs to the annexin family.

This protein is an anticoagulant protein that acts as an indirect inhibitor of the thromboplastin-specific complex, which is involved in the blood coagulation cascade. The protein is Annexin A8 (ANXA8) of Oryctolagus cuniculus (Rabbit).